An 80-amino-acid polypeptide reads, in one-letter code: Putative membrane protein insertion efficiency factor (80 aa).

This sequence belongs to the UPF0161 family.

The protein localises to the cell inner membrane. Could be involved in insertion of integral membrane proteins into the membrane. The chain is Putative membrane protein insertion efficiency factor from Paracoccus denitrificans (strain Pd 1222).